The chain runs to 734 residues: Alpha-catulin (734 aa).

S374 and S538 each carry phosphoserine.

This sequence belongs to the vinculin/alpha-catenin family. As to quaternary structure, interacts with ARHGEF1. Interacts with DTNA. The interaction is required for correct localization of both CTNL1 and DTNA. Widely expressed. Expressed at lower level in neural tissues and at the highest level in the adrenal gland.

Its subcellular location is the cytoplasm. It localises to the cytoskeleton. The protein localises to the cell membrane. In terms of biological role, may modulate the Rho pathway signaling by providing a scaffold for the Lbc Rho guanine nucleotide exchange factor (ARHGEF1). The protein is Alpha-catulin (CTNNAL1) of Homo sapiens (Human).